Consider the following 294-residue polypeptide: N-acetylmuramic acid 6-phosphate etherase (294 aa).

The region spanning 54-217 (VIKSFEEEGR…STASMIGVGK (164 aa)) is the SIS domain. The active-site Proton donor is glutamate 82. Glutamate 113 is an active-site residue.

Belongs to the GCKR-like family. MurNAc-6-P etherase subfamily. As to quaternary structure, homodimer.

It catalyses the reaction N-acetyl-D-muramate 6-phosphate + H2O = N-acetyl-D-glucosamine 6-phosphate + (R)-lactate. The protein operates within amino-sugar metabolism; N-acetylmuramate degradation. In terms of biological role, specifically catalyzes the cleavage of the D-lactyl ether substituent of MurNAc 6-phosphate, producing GlcNAc 6-phosphate and D-lactate. In Bacillus cereus (strain B4264), this protein is N-acetylmuramic acid 6-phosphate etherase.